The chain runs to 38 residues: Large ribosomal subunit protein bL36 (38 aa).

Belongs to the bacterial ribosomal protein bL36 family.

The protein is Large ribosomal subunit protein bL36 of Cellvibrio japonicus (strain Ueda107) (Pseudomonas fluorescens subsp. cellulosa).